Reading from the N-terminus, the 149-residue chain is MQVILLDKVAHLGSVGDQVTVKSGFARNFLIPQGKAVMATAANIAHFEARRAELEAKAAEALAAAQARAAKIAEIAAVSVSATAGDDGRLFGSISAKDIADALTAAGVAVAKSEVRLGEGPLRTTGEHEVKVHLHPEVNAAVTVNVVAE.

Belongs to the bacterial ribosomal protein bL9 family.

Functionally, binds to the 23S rRNA. The protein is Large ribosomal subunit protein bL9 of Actinobacillus pleuropneumoniae serotype 3 (strain JL03).